The following is a 630-amino-acid chain: E3 ubiquitin-protein ligase TRIM41 (630 aa).

An RING-type; degenerate zinc finger spans residues 20-61 (CAICLDYFTDPVSIGCGHNFCRVCVTQLWGGEDEEDRDELDR). Residues 51-75 (EDEEDRDELDREEEEEEVGEEEEVE) are compositionally biased toward acidic residues. Disordered stretches follow at residues 51-97 (EDEE…GDME) and 148-176 (EDED…PPPA). The residue at position 85 (threonine 85) is a Phosphothreonine. The span at 148–166 (EDEDEEEEVLEEDEEEELD) shows a compositional bias: acidic residues. The B box-type zinc-finger motif lies at 222-263 (NEQGICPRHQEALKLFCEVDEEAICVVCRESRSHKQHSVVPL). Positions 227, 230, 249, and 255 each coordinate Zn(2+). Lysine 256 is covalently cross-linked (Glycyl lysine isopeptide (Lys-Gly) (interchain with G-Cter in SUMO2)). Residues 281-374 (LRKHLEAVQK…AEAQERSQQG (94 aa)) adopt a coiled-coil conformation. Residues 413–630 (LTDAIVRKMS…SKGTRIKLCP (218 aa)) enclose the B30.2/SPRY domain. Serine 447 carries the phosphoserine modification. A disordered region spans residues 503-535 (ARESTHHKEKVGSGGSSVSSGDASSSRHHHRRR).

Belongs to the TRIM/RBCC family. As to quaternary structure, interacts with PRKCA. Interacts with NOD2. Interacts with TRIM17; this interaction prevents TRIM41 activity on ZSCAN2. Auto-ubiquitinated.

It is found in the cytoplasm. It localises to the nucleus. It catalyses the reaction S-ubiquitinyl-[E2 ubiquitin-conjugating enzyme]-L-cysteine + [acceptor protein]-L-lysine = [E2 ubiquitin-conjugating enzyme]-L-cysteine + N(6)-ubiquitinyl-[acceptor protein]-L-lysine.. The protein operates within protein modification; protein ubiquitination. In terms of biological role, E3 ligase that plays essential roles in innate antiviral response. Directly binds to influenza A virus or vesicular stomatitis virus nucleoproteins and targets them for ubiquitination and proteasomal degradation, thereby limiting viral infections. Activates the innate antiviral response by catalyzing monoubiquitination of CGAS, thereby activating CGAS. Also involved in innate antiviral response by mediating 'Lys-63'-linked polyubiquitylation of BCL10 which in turn hubs NEMO for activation of NF-kappa-B and IRF3 pathways. Catalyzes the ubiquitin-mediated degradation of other substrates including protein kinase C, ZSCAN21 or TOP3B suggesting additional roles besides its function in immune response. In Mus musculus (Mouse), this protein is E3 ubiquitin-protein ligase TRIM41.